We begin with the raw amino-acid sequence, 141 residues long: Cystatin (141 aa).

The N-terminal stretch at 1–26 (MVHSQLPVAASLRLLCALLLLPSATM) is a signal peptide. The Cystatin domain maps to 29–129 (GGLSPRSVTD…CRFQVWSRPW (101 aa)). The short motif at 73-77 (QVVAG) is the Secondary area of contact element. 2 disulfide bridges follow: Cys91/Cys107 and Cys120/Cys140.

The protein belongs to the cystatin family. In terms of tissue distribution, expressed by the venom gland at an extremely low level (at protein level).

It is found in the secreted. Inhibits various C1 cysteine proteases including cathepsin L, papain and cathepsin B. This protein has no toxic activity and its function in the venom is unknown. It may play a role as a housekeeping or regulatory protein. The polypeptide is Cystatin (Cryptophis nigrescens (Eastern small-eyed snake)).